A 244-amino-acid chain; its full sequence is Large ribosomal subunit protein uL30 (244 aa).

The protein belongs to the universal ribosomal protein uL30 family.

The protein is Large ribosomal subunit protein uL30 (RPL7) of Candida glabrata (strain ATCC 2001 / BCRC 20586 / JCM 3761 / NBRC 0622 / NRRL Y-65 / CBS 138) (Yeast).